Reading from the N-terminus, the 346-residue chain is tRNA pseudouridine synthase D (346 aa).

D83 functions as the Nucleophile in the catalytic mechanism. The region spanning 159 to 305 (GVPNYFGEQR…LKQERRALRV (147 aa)) is the TRUD domain.

This sequence belongs to the pseudouridine synthase TruD family.

It carries out the reaction uridine(13) in tRNA = pseudouridine(13) in tRNA. Functionally, responsible for synthesis of pseudouridine from uracil-13 in transfer RNAs. The polypeptide is tRNA pseudouridine synthase D (Hydrogenovibrio crunogenus (strain DSM 25203 / XCL-2) (Thiomicrospira crunogena)).